The primary structure comprises 362 residues: MEMDLPVSAIGFEGFEKRLEISFVEPGLFSDPNGKGLRSLSKAQLDEILGPAECTIVDNLSNDYVDSYVLSESSLFVYSYKIIIKTCGTTKLLLAIPPILRLAETLSLKVQDVRYTRGSFIFPGAQSFPHRHFSEEVAVLDGYFGKLAAGSKAVIMGNPDKTQKWHVYSASAGPVQSNDPVYTLEMCMTGLDREKASVFYKTEGSSAAHMTVRSGIRKILPNSEICDFEFEPCGYSMNSIEGAAVSTIHITPEDGFSYASFESVGYDLKTMELGPLVERVLACFEPAEFSIALHADVATKLLERVCCVDVKGYSLAEWSPEEFGKGGSIVYQKFTKTPYCASPKSVLKGCWKEEEEEKEEKE.

Catalysis depends on residues E13 and E16. S73 acts as the Schiff-base intermediate with substrate; via pyruvic acid in catalysis. Position 73 is a pyruvic acid (Ser); by autocatalysis (S73). C87 serves as the catalytic Proton donor; for catalytic activity. Catalysis depends on proton acceptor; for processing activity residues S236 and H249.

The protein belongs to the eukaryotic AdoMetDC family. Pyruvate is required as a cofactor. Is synthesized initially as an inactive proenzyme. Formation of the active enzyme involves a self-maturation process in which the active site pyruvoyl group is generated from an internal serine residue via an autocatalytic post-translational modification. Two non-identical subunits are generated from the proenzyme in this reaction, and the pyruvate is formed at the N-terminus of the alpha chain, which is derived from the carboxyl end of the proenzyme. The post-translation cleavage follows an unusual pathway, termed non-hydrolytic serinolysis, in which the side chain hydroxyl group of the serine supplies its oxygen atom to form the C-terminus of the beta chain, while the remainder of the serine residue undergoes an oxidative deamination to produce ammonia and the pyruvoyl group blocking the N-terminus of the alpha chain.

It carries out the reaction S-adenosyl-L-methionine + H(+) = S-adenosyl 3-(methylsulfanyl)propylamine + CO2. Its pathway is amine and polyamine biosynthesis; S-adenosylmethioninamine biosynthesis; S-adenosylmethioninamine from S-adenosyl-L-methionine: step 1/1. The sequence is that of S-adenosylmethionine decarboxylase proenzyme (SAMDC) from Datura stramonium (Jimsonweed).